The primary structure comprises 153 residues: Actin-related protein 2/3 complex subunit 5-like protein (153 aa).

Position 64 is a phosphoserine (serine 64).

It belongs to the ARPC5 family. May be a component of the Arp2/3 complex in which it may replace ARPC5.

It is found in the cytoplasm. It localises to the cytoskeleton. In terms of biological role, may function as component of the Arp2/3 complex which is involved in regulation of actin polymerization and together with an activating nucleation-promoting factor (NPF) mediates the formation of branched actin networks. This is Actin-related protein 2/3 complex subunit 5-like protein (Arpc5l) from Mus musculus (Mouse).